The chain runs to 280 residues: DegV domain-containing protein TTE1491 (280 aa).

Positions 4-279 constitute a DegV domain; that stretch reads IAIVTDSLSD…PDAAGVFFEE (276 aa). Hexadecanoate contacts are provided by T61 and S93.

May bind long-chain fatty acids, such as palmitate, and may play a role in lipid transport or fatty acid metabolism. The chain is DegV domain-containing protein TTE1491 from Caldanaerobacter subterraneus subsp. tengcongensis (strain DSM 15242 / JCM 11007 / NBRC 100824 / MB4) (Thermoanaerobacter tengcongensis).